The chain runs to 483 residues: Membrane-bound lytic murein transglycosylase F (483 aa).

The first 18 residues, 1–18 (MKGLIARFIAGFALLLWA), serve as a signal peptide directing secretion. Residues 19–267 (WDMVFPWQQL…RIEEKYFNHL (249 aa)) form a non-LT domain region. An LT domain region spans residues 269-483 (HFDYVDIQSY…SKESDSTLKE (215 aa)). Residue Glu312 is part of the active site. Positions 458–483 (QQIQNNEEQPSVPQEISKESDSTLKE) are disordered. Basic and acidic residues predominate over residues 473 to 483 (ISKESDSTLKE).

It in the N-terminal section; belongs to the bacterial solute-binding protein 3 family. In the C-terminal section; belongs to the transglycosylase Slt family.

The protein localises to the cell outer membrane. It catalyses the reaction Exolytic cleavage of the (1-&gt;4)-beta-glycosidic linkage between N-acetylmuramic acid (MurNAc) and N-acetylglucosamine (GlcNAc) residues in peptidoglycan, from either the reducing or the non-reducing ends of the peptidoglycan chains, with concomitant formation of a 1,6-anhydrobond in the MurNAc residue.. Murein-degrading enzyme that degrades murein glycan strands and insoluble, high-molecular weight murein sacculi, with the concomitant formation of a 1,6-anhydromuramoyl product. Lytic transglycosylases (LTs) play an integral role in the metabolism of the peptidoglycan (PG) sacculus. Their lytic action creates space within the PG sacculus to allow for its expansion as well as for the insertion of various structures such as secretion systems and flagella. This chain is Membrane-bound lytic murein transglycosylase F, found in Actinobacillus pleuropneumoniae serotype 5b (strain L20).